We begin with the raw amino-acid sequence, 376 residues long: Protein insensitive (376 aa).

Residues 50–79 (QVEVENRALRDKVRYLEAKLQQHKDLLSQI) adopt a coiled-coil conformation. The BEN domain occupies 258 to 356 (GPNNTCVPAS…TKCADENKMM (99 aa)).

As to quaternary structure, homodimer. Interacts (via BEN domain) with Su(H). Interacts with Cp190.

The protein resides in the nucleus. Its function is as follows. Can act as both a transcriptional repressor and corepressor. Represses the expression of genes involved in neural development and preferentially binds palindromic sequence 5'-CCAATTGG-3' to mediate transcriptional repression. Acts as a corepressor for suppressor of hairless (Su(H)) and inhibits Notch signaling during peripheral nervous system development. The chain is Protein insensitive (insv) from Drosophila melanogaster (Fruit fly).